We begin with the raw amino-acid sequence, 206 residues long: Outer-membrane lipoprotein carrier protein (206 aa).

Positions 1–21 (MTRLLFVLVLSVCLLPVPVKA) are cleaved as a signal peptide.

It belongs to the LolA family. In terms of assembly, monomer.

The protein resides in the periplasm. Functionally, participates in the translocation of lipoproteins from the inner membrane to the outer membrane. Only forms a complex with a lipoprotein if the residue after the N-terminal Cys is not an aspartate (The Asp acts as a targeting signal to indicate that the lipoprotein should stay in the inner membrane). The chain is Outer-membrane lipoprotein carrier protein from Nitrosomonas europaea (strain ATCC 19718 / CIP 103999 / KCTC 2705 / NBRC 14298).